The following is a 182-amino-acid chain: MSRIGRKPIPVPQGVEVKVEGTTVTVKGPKGSLTREFHPDMKITFDGSQILVERPSDEKEHKALHGLTRTLINNMIVGVTNGYQKSLELVGVGYRAAKQGRKLVLTVGYSHPVEMDPPEGIEIEVPAQNQIIVKGIDKELVGNFAATIRAVREPEPYKGKGIKYTDEVIRRKAGKTGGKGKK.

It belongs to the universal ribosomal protein uL6 family. In terms of assembly, part of the 50S ribosomal subunit.

In terms of biological role, this protein binds to the 23S rRNA, and is important in its secondary structure. It is located near the subunit interface in the base of the L7/L12 stalk, and near the tRNA binding site of the peptidyltransferase center. This is Large ribosomal subunit protein uL6 from Carboxydothermus hydrogenoformans (strain ATCC BAA-161 / DSM 6008 / Z-2901).